The following is a 129-amino-acid chain: Dynein 14 kDa light chain, flagellar outer arm (129 aa).

The Thioredoxin domain maps to 2–109; it reads AFITEIANEA…LNRIVTELSG (108 aa). A disulfide bond links Cys34 and Cys37. A disordered region spans residues 107–129; that stretch reads LSGKNPPPAAPAAAPAAPAAEAS. The span at 117–129 shows a compositional bias: low complexity; that stretch reads PAAAPAAPAAEAS.

In terms of assembly, consists of at least 3 heavy chains (alpha, beta and gamma), 2 intermediate chains and 8 light chains.

Its subcellular location is the cell projection. The protein localises to the cilium. The protein resides in the flagellum. It is found in the cytoplasm. It localises to the cytoskeleton. Its subcellular location is the flagellum axoneme. Functionally, may be involved in regulating the redox state of functionally important thiol groups within dynein. The polypeptide is Dynein 14 kDa light chain, flagellar outer arm (Chlamydomonas reinhardtii (Chlamydomonas smithii)).